Reading from the N-terminus, the 361-residue chain is Aromatic amino acid aminotransferase (361 aa).

Lys221 carries the post-translational modification N6-(pyridoxal phosphate)lysine.

Belongs to the class-II pyridoxal-phosphate-dependent aminotransferase family. In terms of assembly, homodimer. The cofactor is pyridoxal 5'-phosphate.

The enzyme catalyses an aromatic L-alpha-amino acid + 2-oxoglutarate = an aromatic oxo-acid + L-glutamate. Aminotransferase that catalyzes the conversion of aromatic amino acids and 2-oxoglutarate into corresponding aromatic oxo acids and L-glutamate. The protein is Aromatic amino acid aminotransferase of Mycobacterium ulcerans (strain Agy99).